The sequence spans 407 residues: Extracellular superoxide dismutase [Cu-Zn] 3 (407 aa).

A signal peptide spans 1–19 (MRLLSVLVFLISVISIAKA). The Extracellular segment spans residues 20 to 386 (DYQYAFCKFN…SESYNDNEPG (367 aa)). Residues Asn51, Asn205, and Asn224 are each glycosylated (N-linked (GlcNAc...) asparagine). His245 and His247 together coordinate Cu cation. Asn256 carries an N-linked (GlcNAc...) asparagine glycan. Cu cation is bound at residue His263. Zn(2+) is bound by residues His263, His271, His280, and Asp283. Residue His320 coordinates Cu cation. 2 N-linked (GlcNAc...) asparagine glycosylation sites follow: Asn321 and Asn364. The chain crosses the membrane as a helical span at residues 387-406 (SSSTVIPFFALIIFSIIFAL). Leu407 is a topological domain (cytoplasmic).

This sequence belongs to the Cu-Zn superoxide dismutase family. Requires Cu cation as cofactor. Zn(2+) is required as a cofactor.

It localises to the cell membrane. It catalyses the reaction 2 superoxide + 2 H(+) = H2O2 + O2. In terms of biological role, protect the extracellular space from toxic effect of reactive oxygen intermediates by converting superoxyde radicals into hydrogen peroxyde and oxygen. The polypeptide is Extracellular superoxide dismutase [Cu-Zn] 3 (sodC) (Dictyostelium discoideum (Social amoeba)).